A 1342-amino-acid polypeptide reads, in one-letter code: MVYSYTEKKRIRKDFGKRPQVLDIPYLLSIQLDSFQKFIEQDPEGQHGLEAAFRSVFPIQSYSGNSELQYVSYRLGEPVFDVKECQIRGVTYSAPLRVKLRLVIYEREAPEGTVKDIKEQEVYMGEIPLMTENGTFVINGTERVIVSQLHRSPGVFFDSDKGKTHSSGKVLYNARIIPYRGPWLDFEFDPKDNLFVRIDRRRKLPATIILRALNFTTAQILDLFFEKVVFEIRDNKLQMELVPERLRGETASFDIEANGKVYVEKARRITARHIRQLEKDGIDRIEVPVEYIAGKVVAKDYVDASTGELICAANMELSLDLLAKLSQAGHKQIETLFTNDLDHGAYISETLRVDPTSDRLSALVEIYRMMRPGEPPTREAAENLFENLFFSEDRYDLSAVGRMKFNRSLLRDEIEGSGILSKEDITEVMKKLIDIRNGRGEVDDIDHLGNRRIRSVGEMAENQFRVGLVRVERAVKERLSLGDLDTLMPQDMINAKPISAAVKEFFGSSQLSQFMDQNNPLSEITHKRRISALGPGGLTRERAGFEVRDVHPTHYGRVCPIETPEGPNIGLINSLSVYAQTNEYGFLETPYRRVRDGVVTDEINYLSAIEEGNFVIAQANSNLDDEGRFLEDLVTCRSKGESSLFSREQVDYMDVSTQQIVSVGASLIPFLEHDDANRALMGANMQRQAVPTLRADKPLVGTGMERAVAVDSGVTSVAKRGGTVQYVDASRIVIKVNEDEMHPGEAGIDIYNLTKYTRSNQNTCINQMPCVNLGEPIERGDVLADGPSTDLGELALGQNMRVAFMPWNGYNFEDSILVSERVVQEDRFTTIHIQELACVSRDTKLGPEEITADIPNVGEAALSKLDESGIVYIGAEVTGGDILVGKVTPKGETQLTPEEKLLRAIFGEKASDVKDSSLRVPNGVSGTVIDVQVFTRDGVEKDKRALEIEEMQLKQAKKDLTEELQILEAGLFARIHAVLVSGGIEAEKLSKLPRERWLELGLTDEDKQNQLEQLAEQYDEMKSEFEKKMDAKRRKITQGDDLAPGVLKIVKVYLAVKRQIQPGDKMAGRHGNKGVISKINPIEDMPYDENGTPVDIVLNPLGVPSRMNIGQILETHLGMAAKGIGEKINAMLKKQEEVAKLREFIQKAYDLGDNVCQKVDLSTFTDDEVLRLAENLKKGMPIATPVFDGATEKEIKELLQLGGLPTSGQITLFDGRTGEQFERQVTVGYMYMLKLNHLVDDKMHARSTGSYSLVTQQPLGGKAQFGGQRFGEMEVWALEAYGAAYTLQEMLTVKSDDVNGRTKMYKNIVDGDHRMEPGMPESFNVLLKEIRSLGINIELEEE.

The protein belongs to the RNA polymerase beta chain family. The RNAP catalytic core consists of 2 alpha, 1 beta, 1 beta' and 1 omega subunit. When a sigma factor is associated with the core the holoenzyme is formed, which can initiate transcription.

The enzyme catalyses RNA(n) + a ribonucleoside 5'-triphosphate = RNA(n+1) + diphosphate. In terms of biological role, DNA-dependent RNA polymerase catalyzes the transcription of DNA into RNA using the four ribonucleoside triphosphates as substrates. The protein is DNA-directed RNA polymerase subunit beta of Yersinia pestis bv. Antiqua (strain Angola).